Here is a 478-residue protein sequence, read N- to C-terminus: MSSGTLYDKVWDLHRVADLPGGSTQLFVGLHLIHEVTSPQAFAALQDKGLPVRCPERTVATVDHIVPTISQKRPFADPLAEEMLSTLERNCANYGIVLCGLGSGRQGIVHVIAPELGLTQPGMTVACGDSHTSTHGAFGAIAFGIGTSQVRDVLASQSLAMNKLKVRRIWVDGQLGSGVYAKDLILHVIRSLGVKAGVGYAYEFAGPAIDVLSMEERMTLCNMAIEGGARCGYVNPDGVTFDYLQGRFYAPTGEALHRAVAWWRSLASDPNAVFDDEVTFDAASIAPMVTWGITPGQGIAVDESVPTADSLEPSERPISEEACRYMDLEPGMAIEGVPVDVCFIGSCTNGRLSDLKAAAAIAKGRHVAQGIKAFVVPGSEQVARAAEAEGLDGVFRKAGFEWREPGCSMCLAMNPDRLEGRQISASSSNRNFKGRQGSSRGRTLLMSPAMVAAAAITGQVTDVRKLISNTVPSKSFHQ.

Residues Cys-347, Cys-407, and Cys-410 each contribute to the [4Fe-4S] cluster site.

The protein belongs to the aconitase/IPM isomerase family. LeuC type 1 subfamily. Heterodimer of LeuC and LeuD. Requires [4Fe-4S] cluster as cofactor.

It catalyses the reaction (2R,3S)-3-isopropylmalate = (2S)-2-isopropylmalate. It participates in amino-acid biosynthesis; L-leucine biosynthesis; L-leucine from 3-methyl-2-oxobutanoate: step 2/4. Catalyzes the isomerization between 2-isopropylmalate and 3-isopropylmalate, via the formation of 2-isopropylmaleate. This Prochlorococcus marinus (strain MIT 9313) protein is 3-isopropylmalate dehydratase large subunit.